A 321-amino-acid polypeptide reads, in one-letter code: Trem-like transcript 2 protein (321 aa).

The first 18 residues, 1–18, serve as a signal peptide directing secretion; sequence MAPAFLLLLLLWPQGCVS. Residues 19–268 lie on the Extracellular side of the membrane; sequence GPSADSVYTK…PSIRHQDVYS (250 aa). The Ig-like V-type domain maps to 20-121; that stretch reads PSADSVYTKV…ILYPLMGFQL (102 aa). 2 disulfides stabilise this stretch: Cys-41/Cys-105 and Cys-56/Cys-63. Asn-89 is a glycosylation site (N-linked (GlcNAc...) asparagine). 2 stretches are compositionally biased toward polar residues: residues 189 to 220 and 227 to 241; these read GYSFTATSTTSQGPRRTMGSQTVTASPSNARD and SISTKSGDLSTRSPT. The tract at residues 189–241 is disordered; the sequence is GYSFTATSTTSQGPRRTMGSQTVTASPSNARDSSAGPESISTKSGDLSTRSPT. Residues 269–289 traverse the membrane as a helical segment; sequence TVLGVVLTLLVLMLIMVYGFW. The Cytoplasmic segment spans residues 290–321; it reads KKRHMASYSMCSDPSTRDPPGRPEPYVEVYLI.

Interacts with CD276 and this interaction enhances T-cell activation. Detected in cultured B-cells, T-cell leukemia and monocyte leukemia. Expressed constitutively on CD8 T-cells and induced on CD4 T-cells after activation.

Its subcellular location is the cell membrane. Functionally, cell surface receptor that may play a role in the innate and adaptive immune response. Acts as a counter-receptor for CD276 and interaction with CD276 on T-cells enhances T-cell activation. In Homo sapiens (Human), this protein is Trem-like transcript 2 protein (TREML2).